The sequence spans 257 residues: 4-hydroxy-tetrahydrodipicolinate reductase (257 aa).

NAD(+) is bound by residues 7-12 (GAAGRM), aspartate 32, 91-93 (GTT), and 115-118 (SPNF). The active-site Proton donor/acceptor is histidine 147. Residue histidine 148 coordinates (S)-2,3,4,5-tetrahydrodipicolinate. Residue lysine 151 is the Proton donor of the active site. 157-158 (GT) contributes to the (S)-2,3,4,5-tetrahydrodipicolinate binding site.

It belongs to the DapB family.

The protein localises to the cytoplasm. The catalysed reaction is (S)-2,3,4,5-tetrahydrodipicolinate + NAD(+) + H2O = (2S,4S)-4-hydroxy-2,3,4,5-tetrahydrodipicolinate + NADH + H(+). It catalyses the reaction (S)-2,3,4,5-tetrahydrodipicolinate + NADP(+) + H2O = (2S,4S)-4-hydroxy-2,3,4,5-tetrahydrodipicolinate + NADPH + H(+). The protein operates within amino-acid biosynthesis; L-lysine biosynthesis via DAP pathway; (S)-tetrahydrodipicolinate from L-aspartate: step 4/4. Functionally, catalyzes the conversion of 4-hydroxy-tetrahydrodipicolinate (HTPA) to tetrahydrodipicolinate. The sequence is that of 4-hydroxy-tetrahydrodipicolinate reductase from Archaeoglobus fulgidus (strain ATCC 49558 / DSM 4304 / JCM 9628 / NBRC 100126 / VC-16).